The primary structure comprises 705 residues: Elongation factor G (705 aa).

One can recognise a tr-type G domain in the interval 8 to 290 (AYYRNIGISA…AVIEYLPAPT (283 aa)). Residues 17-24 (AHIDAGKT), 88-92 (DTPGH), and 142-145 (NKMD) contribute to the GTP site.

It belongs to the TRAFAC class translation factor GTPase superfamily. Classic translation factor GTPase family. EF-G/EF-2 subfamily.

It localises to the cytoplasm. Its function is as follows. Catalyzes the GTP-dependent ribosomal translocation step during translation elongation. During this step, the ribosome changes from the pre-translocational (PRE) to the post-translocational (POST) state as the newly formed A-site-bound peptidyl-tRNA and P-site-bound deacylated tRNA move to the P and E sites, respectively. Catalyzes the coordinated movement of the two tRNA molecules, the mRNA and conformational changes in the ribosome. The protein is Elongation factor G of Baumannia cicadellinicola subsp. Homalodisca coagulata.